Reading from the N-terminus, the 495-residue chain is Ribosome biogenesis protein YTM1 (495 aa).

The tract at residues 15–97 (VKVIFTTTEP…ETTLTLQYVR (83 aa)) is ubiquitin-like (UBL) domain. WD repeat units lie at residues 129-168 (WSSA…IATS), 175-213 (GHTA…HFTG), 223-262 (GHTG…APEP), 264-295 (ASLL…LWSI), 296-337 (HTAP…STLT), 386-426 (GHAN…PATK), and 458-495 (GDGC…TEQK).

This sequence belongs to the WD repeat WDR12/YTM1 family. In terms of assembly, component of the NOP7 complex, composed of ERB1, NOP7 and YTM1. The complex is held together by ERB1, which interacts with NOP7 via its N-terminal domain and with YTM1 via a high-affinity interaction between the seven-bladed beta-propeller domains of the 2 proteins. The NOP7 complex associates with the 66S pre-ribosome. Interacts (via UBL domain) with MDN1 (via VWFA/MIDAS domain).

The protein localises to the nucleus. It is found in the nucleolus. It localises to the nucleoplasm. Its function is as follows. Component of the NOP7 complex, which is required for maturation of the 25S and 5.8S ribosomal RNAs and formation of the 60S ribosome. This is Ribosome biogenesis protein YTM1 from Chaetomium thermophilum (strain DSM 1495 / CBS 144.50 / IMI 039719) (Thermochaetoides thermophila).